A 199-amino-acid polypeptide reads, in one-letter code: GTP cyclohydrolase-2 (199 aa).

Residue 52-56 participates in GTP binding; it reads RMHSE. Residues cysteine 57, cysteine 68, and cysteine 70 each coordinate Zn(2+). GTP contacts are provided by residues glutamine 73, 94–96, and threonine 116; that span reads EGR. Aspartate 128 functions as the Proton acceptor in the catalytic mechanism. Arginine 130 serves as the catalytic Nucleophile. 2 residues coordinate GTP: threonine 151 and lysine 156.

Belongs to the GTP cyclohydrolase II family. Zn(2+) is required as a cofactor.

It catalyses the reaction GTP + 4 H2O = 2,5-diamino-6-hydroxy-4-(5-phosphoribosylamino)-pyrimidine + formate + 2 phosphate + 3 H(+). It functions in the pathway cofactor biosynthesis; riboflavin biosynthesis; 5-amino-6-(D-ribitylamino)uracil from GTP: step 1/4. Its function is as follows. Catalyzes the conversion of GTP to 2,5-diamino-6-ribosylamino-4(3H)-pyrimidinone 5'-phosphate (DARP), formate and pyrophosphate. The polypeptide is GTP cyclohydrolase-2 (Aliivibrio salmonicida (strain LFI1238) (Vibrio salmonicida (strain LFI1238))).